The primary structure comprises 1168 residues: MLSTVHKAGRAPALLRHGRRVPVQASQLRALTSGAQNTSIFQTQANAAQRLSSQKRWLSASAAAAAASQPAPDAKAYIQSGVVKPRDHVDVKKVLVIGSGGLAIGQAGEFDYSGSQALKALKEAGVASVLINPNIATIQTNHSLADEVYYLPVTPEYVEYVIQREKPDGIFLSFGGQTALNLGVQMQKLGLFEKYGVKVLGTSVRTLELSEDRDLFAKALEEINIPIAKSFAVNTVDEALDAANKIGYPIIVRAAYALGGLGSGFANNEEELRNMAARSLTLSPQILVEKSLKGWKEVEYEVVRDANNNCITVCNMENFDPLGIHTGDSIVVAPSQTLSDEEYHMLRSAAIKIVRHLGVVGECNVQYALQPDGLDYRVIEVNARLSRSSALASKATGYPLAYTAAKIGLGHSLPELPNAVTKTTTANFEPSLDYIVTKIPRWDLSKFQHVKRDIGSAMKSVGEVMAIGRTFEESFQKAIRQVDPRFVGFQGDKFEDLDFELQNPTDRRWLAVGQAMLHENYSVDRVHELSKIDKWFLYKLQNIVDCQKEMQQLGSLEALKKEHILKAKKLGFSDKQIAMAVNSTEDLVRAARKGFGIRPWVKKIDTLAAEFPADTNYLYTTYNASSHDVTFEDKGTVILGSGVYRIGSSVEFDWCAVSATQALRAMGEKTVMINYNPETYSTDFDTADKLYFEELSYERVMDIYELESASGVVVSVGGQLPQNIALRLQETGKARVLGTDPRDIDRAEDRQKFSEILDSIGVDQPAWKELTSVEEAEKFAEEVGYPVLVRPSYVLSGAAMTVIRSKEDLKDKLEAAANVSPEHPVVITKFIEGAQEIDVDGVASEGNLILHAVSEHVEQAGVHSGDATLVLPPANLDQTTMDRVKEIAQKVAKAWRITGPFNMQIIKAEDPEGGLPALKVIECNLRASRSFPFVSKVLGVNFIDAATKALVGKNVPEPTDLMAVKRDYLATKVPQFSWTRLAGADPFLGVEMASTGEMACFGKDLVDAYWASLQSAMNFRVPEPGEGLLFGGDLSKSWLTTIVDYLSPLGYKLYAADNEVKQFLESSAKTKIDVEVIAFPTNDKRALREVFAKNNIRGVFNLAQARGKTVFDVDYVMRRNAVDFGVPLFMEPQTAMLFAQCMAEKLPRPEGIPSEVRRWSEFIGGKPL.

The transit peptide at Met1–Leu51 directs the protein to the mitochondrion. Positions Arg86–Asp483 are carboxyphosphate synthetic domain. ATP-binding positions include Arg213, Ala243–Val298, Arg253, Gly259, Gly260, Lys290, Leu292, Glu297, Gly323, Ile324, His325, Gln366, and Glu380. The ATP-grasp 1 domain occupies Ala217–Leu409. The Mg(2+) site is built by Gln366, Glu380, and Asn382. The Mn(2+) site is built by Gln366, Glu380, and Asn382. Residues Pro484 to Asp628 form an oligomerization domain region. The carbamoyl phosphate synthetic domain stretch occupies residues Val629 to Met1017. The 198-residue stretch at Ser754–Val951 folds into the ATP-grasp 2 domain. ATP contacts are provided by residues Ala780–Ile837, Arg790, Lys829, Ile831, Glu836, Gly861, Val862, His863, Ser864, Gln904, and Glu922. Residues Gln904, Glu922, and Asn924 each coordinate Mg(2+). Residues Gln904, Glu922, and Asn924 each coordinate Mn(2+). An allosteric domain region spans residues Asn1018–Ile1152. Residues Phe1019–Leu1168 form the MGS-like domain.

The protein belongs to the CarB family. In terms of assembly, heterodimer composed of 2 chains; the small (or glutamine) chain promotes the hydrolysis of glutamine to ammonia, which is used by the large (or ammonia) chain to synthesize carbamoyl phosphate. Mg(2+) serves as cofactor. Requires Mn(2+) as cofactor.

Its subcellular location is the mitochondrion matrix. The enzyme catalyses hydrogencarbonate + L-glutamine + 2 ATP + H2O = carbamoyl phosphate + L-glutamate + 2 ADP + phosphate + 2 H(+). The catalysed reaction is hydrogencarbonate + NH4(+) + 2 ATP = carbamoyl phosphate + 2 ADP + phosphate + 2 H(+). It functions in the pathway amino-acid biosynthesis; L-arginine biosynthesis; carbamoyl phosphate from bicarbonate: step 1/1. Its function is as follows. Large subunit of the arginine-specific carbamoyl phosphate synthase (CPSase). CPSase catalyzes the formation of carbamoyl phosphate from the ammonia moiety of glutamine, hydrogencarbonate, and phosphate donated by ATP, the first step of the arginine biosynthetic pathway. The large subunit (synthetase) binds the substrates ammonia (free or transferred from glutamine from the small subunit), hydrogencarbonate and ATP and carries out an ATP-coupled ligase reaction, activating hydrogencarbonate by forming carboxy phosphate which reacts with ammonia to form carbamoyl phosphate. The sequence is that of Carbamoyl phosphate synthase arginine-specific large chain, mitochondrial (arg-3) from Neurospora crassa (strain ATCC 24698 / 74-OR23-1A / CBS 708.71 / DSM 1257 / FGSC 987).